Consider the following 404-residue polypeptide: MTKEKIVLAYSGGLDTSVAIQWLVESGYEVIACCLDVGEGKNLDFIKEKAITVGASESYTIDAKEEFAEDFALIALQAHAYYEGKYPLISALSRPLIAKKLVEVARQEGASAIAHGCTGKGNDQVRFEVAIHALAPDLKVISPVRDWKWSREEEINYAKEHNIPVPIDLDNPFSIDQNLWGRSNECGVLENPWTTPPEAAYDLTVSLEDAPDTADIVEITFDAGIPISLNGENMSLANLILTLNEIAGKHGVGRIDHIENRLVGIKSREVYECPAAVTLIKAHKELEDLTFVREVAHFKPIIEQKISETIYNGLWFSPLTEALVAFLKSTQKFVNGTIRVKLFKGHAIVEGRKSPNSLYDENLATYTSSDTFDQDAAVGFIKLWGLPTKVSAEVNSKVTITTEV.

Residue 9–17 (AYSGGLDTS) participates in ATP binding. Tyr86 contacts L-citrulline. Gly116 provides a ligand contact to ATP. The L-aspartate site is built by Thr118, Asn122, and Asp123. Asn122 serves as a coordination point for L-citrulline. L-citrulline is bound by residues Arg126, Ser174, Ser183, Glu259, and Tyr271.

Belongs to the argininosuccinate synthase family. Type 1 subfamily. In terms of assembly, homotetramer.

Its subcellular location is the cytoplasm. The catalysed reaction is L-citrulline + L-aspartate + ATP = 2-(N(omega)-L-arginino)succinate + AMP + diphosphate + H(+). It functions in the pathway amino-acid biosynthesis; L-arginine biosynthesis; L-arginine from L-ornithine and carbamoyl phosphate: step 2/3. This chain is Argininosuccinate synthase, found in Listeria welshimeri serovar 6b (strain ATCC 35897 / DSM 20650 / CCUG 15529 / CIP 8149 / NCTC 11857 / SLCC 5334 / V8).